The primary structure comprises 205 residues: DNA-directed RNA polymerase subunit 5 (205 aa).

Belongs to the archaeal Rpo5/eukaryotic RPB5 RNA polymerase subunit family.

It is found in the virion. The catalysed reaction is RNA(n) + a ribonucleoside 5'-triphosphate = RNA(n+1) + diphosphate. Its function is as follows. DNA-dependent RNA polymerase catalyzes the transcription of DNA into RNA using the four ribonucleoside triphosphates as substrates. The protein is DNA-directed RNA polymerase subunit 5 of Acanthamoeba polyphaga (Amoeba).